A 750-amino-acid polypeptide reads, in one-letter code: Dual specificity tyrosine-phosphorylation-regulated kinase 1A (750 aa).

Disordered regions lie at residues 56–81 and 104–129; these read ALPY…RDPA and YAKK…KVYN. Positions 109-126 match the Bipartite nuclear localization signal motif; that stretch reads RRHQQGQGDDSSHKKERK. The region spanning 151–471 is the Protein kinase domain; the sequence is YEIDSLIGKG…PYYALQHSFF (321 aa). ATP is bound by residues 157 to 165, Lys180, and 230 to 233; these read IGKGSFGQV and FEML. Catalysis depends on Asp279, which acts as the Proton acceptor. 4 disordered regions span residues 400–434, 477–531, 583–666, and 731–750; these read TKDG…AGES, EGTN…RHSG, SQKN…GNQA, and DRED…VASS. A compositionally biased stretch (polar residues) spans 477–493; sequence EGTNTSNSVSTSPAMEQ. Positions 494–517 are enriched in low complexity; the sequence is SQSSGTTSSTSSSSGGSSGTSNSG. Positions 584–612 are histidine-rich domain (HRD); sequence QKNVPHHHGNGSHHHHHHHHHHHGQHILS. Positions 587–608 are enriched in basic residues; that stretch reads VPHHHGNGSHHHHHHHHHHHGQ. The segment covering 610–621 has biased composition (polar residues); the sequence is ILSNRTRTRIYN. The span at 622–659 shows a compositional bias: low complexity; it reads SPSTSSSTQDSMDIGNSHHSMTSLSSSTTSSSTSSSST. Residues 741–750 are compositionally biased toward polar residues; that stretch reads CVQQSPVASS.

This sequence belongs to the protein kinase superfamily. CMGC Ser/Thr protein kinase family. MNB/DYRK subfamily. In terms of processing, autophosphorylated on tyrosine residues.

The protein resides in the nucleus. It localises to the nucleus speckle. The catalysed reaction is L-seryl-[protein] + ATP = O-phospho-L-seryl-[protein] + ADP + H(+). The enzyme catalyses L-threonyl-[protein] + ATP = O-phospho-L-threonyl-[protein] + ADP + H(+). It catalyses the reaction L-tyrosyl-[protein] + ATP = O-phospho-L-tyrosyl-[protein] + ADP + H(+). It carries out the reaction [DNA-directed RNA polymerase] + ATP = phospho-[DNA-directed RNA polymerase] + ADP + H(+). Functionally, dual-specificity kinase which possesses both serine/threonine and tyrosine kinase activities. Exhibits a substrate preference for proline at position P+1 and arginine at position P-3. Plays an important role in double-strand breaks (DSBs) repair following DNA damage. Mechanistically, phosphorylates RNF169 and increases its ability to block accumulation of TP53BP1 at the DSB sites thereby promoting homologous recombination repair (HRR). Also acts as a positive regulator of transcription by acting as a CTD kinase that mediates phosphorylation of the CTD (C-terminal domain) of the large subunit of RNA polymerase II (RNAP II) POLR2A. Modulates alternative splicing by phosphorylating the splice factor SRSF6. Phosphorylates SEPTIN4, SEPTIN5 and SF3B1. This Xenopus laevis (African clawed frog) protein is Dual specificity tyrosine-phosphorylation-regulated kinase 1A.